Consider the following 302-residue polypeptide: Bifunctional protein FolD (302 aa).

NADP(+) is bound by residues 168 to 170, T197, and V238; that span reads GRS.

This sequence belongs to the tetrahydrofolate dehydrogenase/cyclohydrolase family. Homodimer.

It catalyses the reaction (6R)-5,10-methylene-5,6,7,8-tetrahydrofolate + NADP(+) = (6R)-5,10-methenyltetrahydrofolate + NADPH. It carries out the reaction (6R)-5,10-methenyltetrahydrofolate + H2O = (6R)-10-formyltetrahydrofolate + H(+). It participates in one-carbon metabolism; tetrahydrofolate interconversion. In terms of biological role, catalyzes the oxidation of 5,10-methylenetetrahydrofolate to 5,10-methenyltetrahydrofolate and then the hydrolysis of 5,10-methenyltetrahydrofolate to 10-formyltetrahydrofolate. In Desulfatibacillum aliphaticivorans, this protein is Bifunctional protein FolD.